Consider the following 272-residue polypeptide: Troponin T, fast skeletal muscle (272 aa).

The segment covering 1–50 (MSDEETEQVEEQYEEEEEAQEEEVQEEAPEPEEVQEDAVAEEEREEDEEE) has biased composition (acidic residues). Positions 1-75 (MSDEETEQVE…EKVDFDDIQK (75 aa)) are disordered. Serine 2 carries the post-translational modification N-acetylserine. A Phosphoserine modification is found at serine 2. The segment covering 63–75 (PEGEKVDFDDIQK) has biased composition (basic and acidic residues). At serine 91 the chain carries Phosphoserine. A compositionally biased stretch (basic and acidic residues) spans 114–156 (RAERAEQQRIRAEKEREPQNRLAEEKARREEEDAKRRAEDDMK). The segment at 114–193 (RAERAEQQRI…TAREMKKKIL (80 aa)) is disordered. 3 positions are modified to phosphoserine: serine 162, serine 169, and serine 170. Positions 184–193 (TAREMKKKIL) are enriched in basic and acidic residues. Phosphoserine is present on serine 206. At tyrosine 222 the chain carries Phosphotyrosine. A disordered region spans residues 248–272 (RIDQAQKHSKKAGATAKGKVGGRWK).

This sequence belongs to the troponin T family. Expressed predominantly in skeletal muscle.

In terms of biological role, troponin T is the tropomyosin-binding subunit of troponin, the thin filament regulatory complex which confers calcium-sensitivity to striated muscle actomyosin ATPase activity. The sequence is that of Troponin T, fast skeletal muscle (Tnnt3) from Mus musculus (Mouse).